An 84-amino-acid polypeptide reads, in one-letter code: Cell division topological specificity factor (84 aa).

This sequence belongs to the MinE family.

In terms of biological role, prevents the cell division inhibition by proteins MinC and MinD at internal division sites while permitting inhibition at polar sites. This ensures cell division at the proper site by restricting the formation of a division septum at the midpoint of the long axis of the cell. The chain is Cell division topological specificity factor from Ralstonia nicotianae (strain ATCC BAA-1114 / GMI1000) (Ralstonia solanacearum).